The primary structure comprises 217 residues: Cytochrome c biogenesis ATP-binding export protein CcmA (217 aa).

Residues 16 to 214 (LVLEQLSCER…AHGQAEVTEG (199 aa)) enclose the ABC transporter domain. 48–55 (GANGAGKT) provides a ligand contact to ATP.

The protein belongs to the ABC transporter superfamily. CcmA exporter (TC 3.A.1.107) family. The complex is composed of two ATP-binding proteins (CcmA) and two transmembrane proteins (CcmB).

The protein localises to the cell inner membrane. The catalysed reaction is heme b(in) + ATP + H2O = heme b(out) + ADP + phosphate + H(+). Part of the ABC transporter complex CcmAB involved in the biogenesis of c-type cytochromes; once thought to export heme, this seems not to be the case, but its exact role is uncertain. Responsible for energy coupling to the transport system. In Alcanivorax borkumensis (strain ATCC 700651 / DSM 11573 / NCIMB 13689 / SK2), this protein is Cytochrome c biogenesis ATP-binding export protein CcmA.